The chain runs to 489 residues: Interferon gamma receptor 1 (489 aa).

A signal peptide spans 1 to 17 (MALLFLLPLVMQGVSRA). The Extracellular portion of the chain corresponds to 18–245 (EMGTADLGPS…ITIFNSSIKG (228 aa)). N-linked (GlcNAc...) asparagine glycans are attached at residues Asn34, Asn79, and Asn86. Cys77 and Cys85 are oxidised to a cystine. A disulfide bridge links Cys122 with Cys167. Residue Asn179 is glycosylated (N-linked (GlcNAc...) asparagine). 2 disulfides stabilise this stretch: Cys195–Cys200 and Cys214–Cys235. Residue Asn240 is glycosylated (N-linked (GlcNAc...) asparagine). A helical transmembrane segment spans residues 246–266 (SLWIPVVAALLLFLVLSLVFI). The Cytoplasmic segment spans residues 267–489 (CFYIKKINPL…RPTEDSKEFS (223 aa)). A disordered region spans residues 329–437 (ATVPGMHTED…SEFPPNNKGE (109 aa)). Residues 335 to 348 (HTEDNPGKVEHTEE) are compositionally biased toward basic and acidic residues. The span at 349–360 (LSSITEVVTTEE) shows a compositional bias: polar residues. At Ser369 the chain carries Phosphoserine. Thr372 is subject to Phosphothreonine. A Phosphoserine modification is found at Ser378. Positions 379-391 (SSPLSSNQSEPGS) are enriched in low complexity. The segment covering 401–412 (NCSESDHSRNGF) has biased composition (basic and acidic residues). Ser403 bears the Phosphoserine mark. The span at 415 to 429 (DSSCLESHSSLSDSE) shows a compositional bias: low complexity. Tyr457 is modified (phosphotyrosine).

Belongs to the type II cytokine receptor family. In terms of assembly, monomer. Heterodimer with IFNGR2, to form the IFNG receptor complex. Interacts with JAK1. Interacts (when phosphorylated) with STAT1. Interacts with SOCS1. Post-translationally, phosphorylated at Ser/Thr residues. Phosphorylation of Tyr-457 is required for IFNG receptor signal transduction. Influenza virus infection leads to phosphorylation in a CSNK1A1-dependent manner. Ubiquitinated after phosphorylation in a CSNK1A1-dependent manner, leading to the lysosome-dependent degradation. Proteasomally degraded through 'Lys-48'-mediated ubiquitination. Ubiquitination is necessary for efficient IFNGR1 signaling.

It is found in the cell membrane. Functionally, receptor subunit for interferon gamma/INFG that plays crucial roles in antimicrobial, antiviral, and antitumor responses by activating effector immune cells and enhancing antigen presentation. Associates with transmembrane accessory factor IFNGR2 to form a functional receptor. Upon ligand binding, the intracellular domain of IFNGR1 opens out to allow association of downstream signaling components JAK1 and JAK2. In turn, activated JAK1 phosphorylates IFNGR1 to form a docking site for STAT1. Subsequent phosphorylation of STAT1 leads to dimerization, translocation to the nucleus, and stimulation of target gene transcription. STAT3 can also be activated in a similar manner although activation seems weaker. IFNGR1 intracellular domain phosphorylation also provides a docking site for SOCS1 that regulates the JAK-STAT pathway by competing with STAT1 binding to IFNGR1. In Homo sapiens (Human), this protein is Interferon gamma receptor 1.